The sequence spans 143 residues: Large ribosomal subunit protein uL11 (143 aa).

Belongs to the universal ribosomal protein uL11 family. In terms of assembly, part of the ribosomal stalk of the 50S ribosomal subunit. Interacts with L10 and the large rRNA to form the base of the stalk. L10 forms an elongated spine to which L12 dimers bind in a sequential fashion forming a multimeric L10(L12)X complex. One or more lysine residues are methylated.

In terms of biological role, forms part of the ribosomal stalk which helps the ribosome interact with GTP-bound translation factors. In Caulobacter vibrioides (strain ATCC 19089 / CIP 103742 / CB 15) (Caulobacter crescentus), this protein is Large ribosomal subunit protein uL11.